A 361-amino-acid polypeptide reads, in one-letter code: tRNA 2-selenouridine synthase (361 aa).

The Rhodanese domain occupies 14–137; sequence LIADTPIIDV…LRQTAIQATI (124 aa). Residue Cys-97 is the S-selanylcysteine intermediate of the active site.

Belongs to the SelU family. Monomer.

The catalysed reaction is 5-methylaminomethyl-2-thiouridine(34) in tRNA + selenophosphate + (2E)-geranyl diphosphate + H2O + H(+) = 5-methylaminomethyl-2-selenouridine(34) in tRNA + (2E)-thiogeraniol + phosphate + diphosphate. It catalyses the reaction 5-methylaminomethyl-2-thiouridine(34) in tRNA + (2E)-geranyl diphosphate = 5-methylaminomethyl-S-(2E)-geranyl-thiouridine(34) in tRNA + diphosphate. It carries out the reaction 5-methylaminomethyl-S-(2E)-geranyl-thiouridine(34) in tRNA + selenophosphate + H(+) = 5-methylaminomethyl-2-(Se-phospho)selenouridine(34) in tRNA + (2E)-thiogeraniol. The enzyme catalyses 5-methylaminomethyl-2-(Se-phospho)selenouridine(34) in tRNA + H2O = 5-methylaminomethyl-2-selenouridine(34) in tRNA + phosphate. Involved in the post-transcriptional modification of the uridine at the wobble position (U34) of tRNA(Lys), tRNA(Glu) and tRNA(Gln). Catalyzes the conversion of 2-thiouridine (S2U-RNA) to 2-selenouridine (Se2U-RNA). Acts in a two-step process involving geranylation of 2-thiouridine (S2U) to S-geranyl-2-thiouridine (geS2U) and subsequent selenation of the latter derivative to 2-selenouridine (Se2U) in the tRNA chain. The polypeptide is tRNA 2-selenouridine synthase (Escherichia coli O6:H1 (strain CFT073 / ATCC 700928 / UPEC)).